The primary structure comprises 91 residues: Large ribosomal subunit protein bL31B (91 aa).

The protein belongs to the bacterial ribosomal protein bL31 family. Type B subfamily. As to quaternary structure, part of the 50S ribosomal subunit.

This Neisseria meningitidis serogroup C (strain 053442) protein is Large ribosomal subunit protein bL31B.